A 954-amino-acid polypeptide reads, in one-letter code: Glycine dehydrogenase (decarboxylating) (954 aa).

Lys-704 bears the N6-(pyridoxal phosphate)lysine mark.

This sequence belongs to the GcvP family. As to quaternary structure, the glycine cleavage system is composed of four proteins: P, T, L and H. It depends on pyridoxal 5'-phosphate as a cofactor.

The enzyme catalyses N(6)-[(R)-lipoyl]-L-lysyl-[glycine-cleavage complex H protein] + glycine + H(+) = N(6)-[(R)-S(8)-aminomethyldihydrolipoyl]-L-lysyl-[glycine-cleavage complex H protein] + CO2. The glycine cleavage system catalyzes the degradation of glycine. The P protein binds the alpha-amino group of glycine through its pyridoxal phosphate cofactor; CO(2) is released and the remaining methylamine moiety is then transferred to the lipoamide cofactor of the H protein. The sequence is that of Glycine dehydrogenase (decarboxylating) from Vibrio parahaemolyticus serotype O3:K6 (strain RIMD 2210633).